Here is a 181-residue protein sequence, read N- to C-terminus: Adenylate kinase (181 aa).

10-15 (GAGKGT) serves as a coordination point for ATP. The NMP stretch occupies residues 30-59 (STGDLFRANISQGTELGKQAQEYMDAGKLV). AMP-binding positions include threonine 31, arginine 36, 57–59 (KLV), 85–88 (GFPR), and glutamine 92. The tract at residues 126-132 (SRGRNDD) is LID. ATP is bound at residue arginine 127. AMP contacts are provided by arginine 129 and arginine 140. Residue glycine 166 participates in ATP binding.

The protein belongs to the adenylate kinase family. In terms of assembly, monomer.

The protein resides in the cytoplasm. It carries out the reaction AMP + ATP = 2 ADP. The protein operates within purine metabolism; AMP biosynthesis via salvage pathway; AMP from ADP: step 1/1. In terms of biological role, catalyzes the reversible transfer of the terminal phosphate group between ATP and AMP. Plays an important role in cellular energy homeostasis and in adenine nucleotide metabolism. The chain is Adenylate kinase from Corynebacterium urealyticum (strain ATCC 43042 / DSM 7109).